The chain runs to 426 residues: Serine/threonine-protein kinase ssn3 (426 aa).

The region spanning 41 to 368 (YHIVGFISSG…AQEALEHPYF (328 aa)) is the Protein kinase domain. Residues 47–55 (ISSGTYGRV) and K71 contribute to the ATP site. Residue D173 is the Proton acceptor of the active site. Residues 390–426 (RVTQDDNDIRSGSLPGTKRSGLPDDSLMGRAAKRLKE) form a disordered region.

This sequence belongs to the protein kinase superfamily. CMGC Ser/Thr protein kinase family. CDC2/CDKX subfamily. Component of the srb8-11 complex, a regulatory module of the Mediator complex. It depends on Mg(2+) as a cofactor.

The protein localises to the nucleus. The catalysed reaction is L-seryl-[protein] + ATP = O-phospho-L-seryl-[protein] + ADP + H(+). The enzyme catalyses L-threonyl-[protein] + ATP = O-phospho-L-threonyl-[protein] + ADP + H(+). It catalyses the reaction [DNA-directed RNA polymerase] + ATP = phospho-[DNA-directed RNA polymerase] + ADP + H(+). Its function is as follows. Component of the srb8-11 complex. The srb8-11 complex is a regulatory module of the Mediator complex which is itself involved in regulation of basal and activated RNA polymerase II-dependent transcription. The srb8-11 complex may be involved in the transcriptional repression of a subset of genes regulated by Mediator. It may inhibit the association of the Mediator complex with RNA polymerase II to form the holoenzyme complex. The srb8-11 complex phosphorylates the C-terminal domain (CTD) of the largest subunit of RNA polymerase II. The polypeptide is Serine/threonine-protein kinase ssn3 (ssn3) (Aspergillus clavatus (strain ATCC 1007 / CBS 513.65 / DSM 816 / NCTC 3887 / NRRL 1 / QM 1276 / 107)).